A 311-amino-acid chain; its full sequence is NEDD4 family-interacting protein 2 (311 aa).

The tract at residues arginine 1–alanine 133 is disordered. Over arginine 1 to glycine 206 the chain is Cytoplasmic. The span at alanine 7 to alanine 22 shows a compositional bias: low complexity. Residues aspartate 26 to glycine 37 show a composition bias toward gly residues. Residues serine 38–threonine 47 are compositionally biased toward low complexity. A compositionally biased stretch (basic and acidic residues) spans arginine 48–glutamine 75. Residues glutamate 92 to threonine 101 are compositionally biased toward polar residues. Over residues serine 102–proline 120 the composition is skewed to low complexity. The interaction with NEDD4 stretch occupies residues proline 123–tyrosine 126. Residues proline 123–tyrosine 126 carry the PPxY motif 1 motif. 4 positions are modified to phosphotyrosine; by SRC: tyrosine 126, tyrosine 142, tyrosine 146, and tyrosine 152. Short sequence motifs (PPxY motif) lie at residues proline 149 to tyrosine 152 and proline 159 to tyrosine 161. A helical membrane pass occupies residues isoleucine 207–phenylalanine 227. The Extracellular segment spans residues cysteine 228–threonine 232. A helical membrane pass occupies residues isoleucine 233–isoleucine 253. The Cytoplasmic portion of the chain corresponds to valine 254–glycine 262. Residues tyrosine 263 to phenylalanine 283 traverse the membrane as a helical segment. At arginine 284 to leucine 311 the chain is on the extracellular side.

As to quaternary structure, forms heterodimers with NDFIP1. Interacts with HECT domain-containing E3 ubiquitin-protein ligases, including NEDD4. Interacts with NEDD4L. When phosphorylated at Tyr-142, interacts with SRC and LYN SH2 domain. May thus act as a scaffold that recruits SRC to NDFIP1, enhancing NDFIP1 phosphorylation. Interacts with SLC11A2/DMT1. May interact with phosphorylated EGFR. Interacts with KCNH2. Ubiquitinated by NEDD4 and NEDD4L; which does not affect turnover. Also ubiquitinated by ITCH. In terms of processing, undergoes transient tyrosine-phosphorylation following EGF stimulation, most probably catalyzed by SRC. Phosphorylation on Tyr-126, Tyr-146 and Tyr-152 are dependent on the phosphorylation on Tyr-142. Also phosphorylated by LYN and FYN. Ubiquitously expressed, with highest levels in brain, liver, kidney and testis.

The protein localises to the endosome membrane. The protein resides in the golgi apparatus membrane. Its subcellular location is the endosome. It localises to the multivesicular body membrane. Its function is as follows. Activates HECT domain-containing E3 ubiquitin-protein ligases, including ITCH, NEDD4, NEDD4L, SMURF2, WWP1 and WWP2, and consequently modulates the stability of their targets. As a result, may control many cellular processes. Recruits ITCH, NEDD4 and SMURF2 to endosomal membranes. Negatively regulates KCNH2 potassium channel activity by decreasing its cell-surface expression and interfering with channel maturation through recruitment of NEDD4L to the Golgi apparatus and multivesicular body where it mediates KCNH2 degradation. May modulate EGFR signaling. Together with NDFIP1, limits the cytokine signaling and expansion of effector Th2 T-cells by promoting degradation of JAK1, probably by ITCH- and NEDD4L-mediated ubiquitination. The sequence is that of NEDD4 family-interacting protein 2 (Ndfip2) from Mus musculus (Mouse).